An 846-amino-acid polypeptide reads, in one-letter code: Homeodomain-interacting protein kinase 1 (846 aa).

The interval 47-74 (NPFSIQKAPGTSSDNEQRAPKRRADEEA) is disordered. The segment covering 61-72 (NEQRAPKRRADE) has biased composition (basic and acidic residues). The Protein kinase domain maps to 147 to 483 (YEVLEFLGKG…PAEGLESKFV (337 aa)). ATP is bound by residues 153–161 (LGKGTFGQV) and lysine 176. The Proton acceptor role is filled by aspartate 272. The tract at residues 741 to 790 (LAAQPKKNSPAPSVITLSSDEDSNGAGSSNSGSTTRTGAVNPVRNDTLPM) is disordered. Residues 746–757 (KKNSPAPSVITL) show a composition bias toward polar residues. Over residues 764 to 773 (NGAGSSNSGS) the composition is skewed to low complexity.

This sequence belongs to the protein kinase superfamily. CMGC Ser/Thr protein kinase family. HIPK subfamily. In terms of tissue distribution, broadly expressed during embryogenesis. Expression becomes more restricted during larval development. L3 larvae display robust expression in many head and motor neurons, and lower levels of expression in the intestine and the seam cells of the hypodermis. By late L4 stage, expression is largely restricted to neurons and is maintained in nerve cells of the head and nerve cord during adulthood. Expressed in adult pharyngeal cells, hypodermal cells, gonadal sheath cells and distal tip cells but not in germline cells. Expressed in serotonergic neurons such as ADF and NSM and in GABAergic neurons, including RME, RIS and DVB.

The protein resides in the nucleus. It carries out the reaction L-seryl-[protein] + ATP = O-phospho-L-seryl-[protein] + ADP + H(+). The catalysed reaction is L-threonyl-[protein] + ATP = O-phospho-L-threonyl-[protein] + ADP + H(+). Functionally, serine/threonine-protein kinase required in the somatic gonadal cells to regulate germline proliferation during larval development and in adulthood. Plays a role in the development/differentiation of gonadal distal tip cells. Required for normal lifespan in a pha-4 and mxl-2-dependent manner. Also contributes to survival following heat or oxidative stress. Prevents sumoylation and inactivation of heat shock transcription factor hsf-1 which enhances hsf-1-dependent transcriptional induction of chaperones in response to heat shock. Also required for hormetic extension of longevity in response to heat stress. Also contributes to longevity by promoting autophagy under nutrient stress conditions through induction of autophagosome formation and autophagy gene expression. Provides protection against proteotoxic polyglutamine aggregate and the associated locomotory toxicity, probably as a result of kinase activity. Contributes to longevity via gamma-aminobutyric acid (GABA)ergic signaling by promoting autophagy through mxl-2, hlh-30 and daf-16 but independent of hsf-1 and phas-4, to induce autophagosome formation and the expression of autophagy genes. Promotes thermotolerance via serotonergic signaling by serotonergic neurons. Preserves neuronal function in aging animals by mitigating against age-associated decline in axonal and synaptic transmissions. Acts as an activator of nhr-49-dependent hypoxia response, including the up-regulation of fmo-2 and acs-2, the induction of autophagosome formation and expression of autophagy genes. The chain is Homeodomain-interacting protein kinase 1 from Caenorhabditis elegans.